We begin with the raw amino-acid sequence, 148 residues long: Glutamate mutase sigma subunit 2 (148 aa).

Residues 1 to 134 enclose the B12-binding domain; it reads MRTVILGVIG…EALKADLGHR (134 aa). Adenosylcob(III)alamin-binding positions include 11 to 15, H14, 59 to 61, and 90 to 94; these read SDAHV, SSL, and NLAVG. Over residues 129-141 the composition is skewed to basic and acidic residues; that stretch reads ADLGHRSREEASS. The disordered stretch occupies residues 129-148; it reads ADLGHRSREEASSEKVQLGS.

The protein belongs to the methylaspartate mutase GlmS subunit family. As to quaternary structure, heterotetramer composed of 2 epsilon subunits (GlmE) and 2 sigma subunits (GlmS). GlmE exists as a homodimer and GlmS as a monomer. Requires adenosylcob(III)alamin as cofactor.

It catalyses the reaction (2S,3S)-3-methyl-L-aspartate = L-glutamate. The protein operates within amino-acid degradation; L-glutamate degradation via mesaconate pathway; acetate and pyruvate from L-glutamate: step 1/4. Functionally, catalyzes the carbon skeleton rearrangement of L-glutamate to L-threo-3-methylaspartate ((2S,3S)-3-methylaspartate). This Haloarcula marismortui (strain ATCC 43049 / DSM 3752 / JCM 8966 / VKM B-1809) (Halobacterium marismortui) protein is Glutamate mutase sigma subunit 2.